A 706-amino-acid chain; its full sequence is SPX domain-containing membrane protein Os09g0521800 (706 aa).

The SPX domain maps to 2–145; the sequence is VNFSNKLTKD…GYKFTDYYVR (144 aa). 6 helical membrane-spanning segments follow: residues 251-271, 281-301, 318-338, 340-359, 378-398, and 414-434; these read MSLV…YIVV, LGAA…AQVF, LLFS…AFDL, SLTI…ARAV, AAFV…AGLL, and LPGW…WILF. The disordered stretch occupies residues 475-498; that stretch reads SEQDEEDDNGDEEHNETLSSSTTT. Residues 476–488 are compositionally biased toward acidic residues; the sequence is EQDEEDDNGDEEH. 5 helical membrane-spanning segments follow: residues 520–540, 554–574, 583–603, 611–631, and 678–698; these read LLIY…SSVV, VFLA…GTYI, ILVA…KLTV, VCSA…NLSL, and LLNA…AATL.

This sequence belongs to the major facilitator superfamily.

It is found in the membrane. This chain is SPX domain-containing membrane protein Os09g0521800, found in Oryza sativa subsp. japonica (Rice).